The sequence spans 84 residues: Gomesin (84 aa).

Positions 1–23 (MNRTRLFACLLLAVLILVHESNA) are cleaved as a signal peptide. A Pyrrolidone carboxylic acid modification is found at glutamine 24. 2 disulfide bridges follow: cysteine 25–cysteine 38 and cysteine 29–cysteine 34. Arginine 41 carries the post-translational modification Arginine amide. A propeptide spanning residues 42–84 (GKRSLDETNVGTSDVEKRAFDDSNVPSLVEERELEDEGSFIFD) is cleaved from the precursor.

In terms of tissue distribution, in hemocytes only, but not in all hemocytes observed.

It is found in the secreted. In terms of biological role, active against several Gram-positive bacteria such as Bacillus spp, Staphylococcus spp and E.faecalis, several Gram-negative bacteria such as E.coli, K.pneumoniae, P.aeruginosa and Salmonella spp, filamentous fungi such as N.crassa, T.viridae and yeasts such as C.albicans. It is active against the parasite L.amazonensis as well. It shows hemolytic activity. The chain is Gomesin from Acanthoscurria gomesiana (Tarantula spider).